Reading from the N-terminus, the 619-residue chain is Dihydroxy-acid dehydratase (619 aa).

Asp-81 lines the Mg(2+) pocket. [2Fe-2S] cluster is bound at residue Cys-122. Asp-123 and Lys-124 together coordinate Mg(2+). Lys-124 is modified (N6-carboxylysine). Cys-195 lines the [2Fe-2S] cluster pocket. Position 494 (Glu-494) interacts with Mg(2+). Ser-520 serves as the catalytic Proton acceptor.

This sequence belongs to the IlvD/Edd family. As to quaternary structure, homodimer. The cofactor is [2Fe-2S] cluster. Mg(2+) serves as cofactor.

The catalysed reaction is (2R)-2,3-dihydroxy-3-methylbutanoate = 3-methyl-2-oxobutanoate + H2O. The enzyme catalyses (2R,3R)-2,3-dihydroxy-3-methylpentanoate = (S)-3-methyl-2-oxopentanoate + H2O. Its pathway is amino-acid biosynthesis; L-isoleucine biosynthesis; L-isoleucine from 2-oxobutanoate: step 3/4. It participates in amino-acid biosynthesis; L-valine biosynthesis; L-valine from pyruvate: step 3/4. In terms of biological role, functions in the biosynthesis of branched-chain amino acids. Catalyzes the dehydration of (2R,3R)-2,3-dihydroxy-3-methylpentanoate (2,3-dihydroxy-3-methylvalerate) into 2-oxo-3-methylpentanoate (2-oxo-3-methylvalerate) and of (2R)-2,3-dihydroxy-3-methylbutanoate (2,3-dihydroxyisovalerate) into 2-oxo-3-methylbutanoate (2-oxoisovalerate), the penultimate precursor to L-isoleucine and L-valine, respectively. The sequence is that of Dihydroxy-acid dehydratase from Shewanella oneidensis (strain ATCC 700550 / JCM 31522 / CIP 106686 / LMG 19005 / NCIMB 14063 / MR-1).